We begin with the raw amino-acid sequence, 169 residues long: Lutropin/choriogonadotropin subunit beta (169 aa).

Residues 1–20 form the signal peptide; that stretch reads MEMLQGLLLWMLLSVGGVWA. 6 disulfide bridges follow: Cys-29-Cys-77, Cys-43-Cys-92, Cys-46-Cys-130, Cys-54-Cys-108, Cys-58-Cys-110, and Cys-113-Cys-120. Residue Asn-33 is glycosylated (N-linked (GlcNAc...) asparagine). Positions 131-169 are disordered; sequence APQTSSSCKDPPSQPLTSTSTPTPGASRRSSHPLPINTS. The span at 145–158 shows a compositional bias: low complexity; sequence PLTSTSTPTPGASR.

It belongs to the glycoprotein hormones subunit beta family. As to quaternary structure, heterodimer of a common alpha chain and a unique beta chain which confers biological specificity to thyrotropin, lutropin, follitropin and gonadotropin.

It localises to the secreted. In terms of biological role, promotes spermatogenesis and ovulation by stimulating the testes and ovaries to synthesize steroids. The sequence is that of Lutropin/choriogonadotropin subunit beta (LHB) from Equus asinus (Donkey).